Here is a 165-residue protein sequence, read N- to C-terminus: RxLR effector protein CRE12 (165 aa).

The N-terminal stretch at 1–23 (MRLAAFVLVAVAFAIIPDGRVSA) is a signal peptide. The short motif at 40 to 59 (RLLRLNAVPQPVETGNQEER) is the RxLR-dEER element.

This sequence belongs to the RxLR effector family.

Its subcellular location is the secreted. The protein resides in the host cell. Functionally, effector that is involved in host plant infection. Contributes to virulence during the early infection stage, by inhibiting plant defense responses induced by both PAMP-triggered immunity (PTI) and effector-triggered immunity (ETI). This chain is RxLR effector protein CRE12, found in Phytophthora infestans (strain T30-4) (Potato late blight agent).